The primary structure comprises 403 residues: MAEPRQEFDVMEDHAQGDYTLQDHEGDMEPGLKESPLQTPADDGSEEPGSETSDAKSTPTAEAEEAGIGDTSNLEDQAAGHVTQARMVSKGKDGTGPDDKKAKGADGKPGTKIATPRGAAPPGQKGQANATRIPAKTTPTPKTSPGTGESGKSGDRSGYSSPGSPGTPGSRSRTPSLPTPPTREPKKVAVVRTPPKSPSAAKSRLQAAPGPMPDLKNVKSKIGSTENLKHQPGGGKVQIINKKLDLSNVQSKCGSKDNIKHVPGGGSVQIVYKPVDLSKVTSKCGSLGNIHHKPGGGQVEVKSEKLDFKDRVQSKIGSLDNITHVPGGGNKKIETHKLTFRENAKAKTDHGAEIVYKSPVVSGDTSPRHLSNVSSTGSIDMVDSPQLATLADEVSASLAKQGL.

A compositionally biased stretch (basic and acidic residues) spans 1–32; it reads MAEPRQEFDVMEDHAQGDYTLQDHEGDMEPGL. Residues 1 to 219 form a disordered region; it reads MAEPRQEFDV…GPMPDLKNVK (219 aa). Position 2 is an N-acetylalanine (Ala-2). Tyr-19 carries the post-translational modification Phosphotyrosine. Lys-33 participates in a covalent cross-link: Glycyl lysine isopeptide (Lys-Gly) (interchain with G-Cter in ubiquitin). Phosphoserine occurs at positions 35 and 50. Positions 50–60 are enriched in polar residues; it reads SETSDAKSTPT. Residues Thr-58, Thr-60, and Thr-71 each carry the phosphothreonine modification. Over residues 90 to 106 the composition is skewed to basic and acidic residues; the sequence is KGKDGTGPDDKKAKGAD. Residue Thr-115 is modified to Phosphothreonine. Position 117 is an omega-N-methylarginine (Arg-117). N6,N6-dimethyllysine; alternate is present on Lys-125. Position 125 is an N6-acetyllysine; alternate (Lys-125). Residues Thr-131, Thr-137, Thr-138, and Thr-143 each carry the phosphothreonine modification. Over residues 136-147 the composition is skewed to low complexity; the sequence is KTTPTPKTSPGT. Phosphoserine is present on residues Ser-153 and Ser-157. Residues 156-176 show a composition bias toward low complexity; sequence RSGYSSPGSPGTPGSRSRTPS. Tyr-159 bears the Phosphotyrosine mark. Phosphoserine is present on residues Ser-160, Ser-161, and Ser-164. Thr-167 and Thr-174 each carry phosphothreonine. The residue at position 176 (Ser-176) is a Phosphoserine. Residue Thr-179 is modified to Phosphothreonine. At Lys-187 the chain carries N6-acetyllysine. Thr-193 is modified (phosphothreonine). Ser-197 and Ser-199 each carry phosphoserine. Tau/MAP repeat units lie at residues 206–236, 237–267, 268–298, and 299–330; these read QAAP…GGGK, VQII…GGGS, VQIV…GGGQ, and VEVK…GGGN. Residue Lys-216 forms a Glycyl lysine isopeptide (Lys-Gly) (interchain with G-Cter in ubiquitin) linkage. Lys-221 bears the N6-acetyllysine; alternate mark. Lys-221 carries the post-translational modification N6-methyllysine; alternate. Lys-221 participates in a covalent cross-link: Glycyl lysine isopeptide (Lys-Gly) (interchain with G-Cter in ubiquitin); alternate. Residue Ser-224 is modified to Phosphoserine. Lys-229 is covalently cross-linked (Glycyl lysine isopeptide (Lys-Gly) (interchain with G-Cter in ubiquitin)). An N6-acetyllysine; alternate modification is found at Lys-243. Residue Lys-243 forms a Glycyl lysine isopeptide (Lys-Gly) (interchain with G-Cter in ubiquitin); alternate linkage. Phosphoserine is present on residues Ser-247 and Ser-251. An N6-acetyllysine modification is found at Lys-252. Cys-253 and Cys-284 are disulfide-bonded. Residue Ser-255 is modified to Phosphoserine. The residue at position 260 (Lys-260) is an N6-acetyllysine; alternate. Lys-260 is covalently cross-linked (Glycyl lysine isopeptide (Lys-Gly) (interchain with G-Cter in ubiquitin); alternate). Phosphoserine is present on Ser-267. Lys-273 is modified (N6,N6-dimethyllysine; alternate). N6-acetyllysine; alternate is present on residues Lys-273, Lys-279, and Lys-283. Residues Lys-273, Lys-279, and Lys-283 each participate in a glycyl lysine isopeptide (Lys-Gly) (interchain with G-Cter in ubiquitin); alternate cross-link. Ser-286 carries the post-translational modification Phosphoserine. Residues Lys-293, Lys-305, and Lys-309 each carry the N6-acetyllysine; alternate modification. Residues Lys-293, Lys-305, and Lys-309 each participate in a glycyl lysine isopeptide (Lys-Gly) (interchain with G-Cter in ubiquitin); alternate cross-link. Arg-311 carries the post-translational modification Omega-N-methylarginine. Ser-314 is modified (phosphoserine). Lys-315 participates in a covalent cross-link: Glycyl lysine isopeptide (Lys-Gly) (interchain with G-Cter in ubiquitin). Ser-318 is subject to Phosphoserine. Lys-331 is modified (N6-acetyllysine; alternate). Lys-331 participates in a covalent cross-link: Glycyl lysine isopeptide (Lys-Gly) (interchain with G-Cter in ubiquitin); alternate. Residue Lys-337 forms a Glycyl lysine isopeptide (Lys-Gly) (interchain with G-Cter in ubiquitin) linkage. At Lys-347 the chain carries N6-acetyllysine; alternate. A Glycyl lysine isopeptide (Lys-Gly) (interchain with G-Cter in ubiquitin); alternate cross-link involves residue Lys-347. Tyr-356 is modified (phosphotyrosine). A phosphoserine mark is found at Ser-358 and Ser-362. Residues 360 to 379 are disordered; that stretch reads VVSGDTSPRHLSNVSSTGSI. The segment covering 363–378 has biased composition (polar residues); the sequence is GDTSPRHLSNVSSTGS. Residue Thr-365 is modified to Phosphothreonine. 4 positions are modified to phosphoserine: Ser-366, Ser-371, Ser-378, and Ser-384. At Thr-389 the chain carries Phosphothreonine.

Interacts with MARK1, MARK2, MARK3 and MARK4. Interacts with SQSTM1 when polyubiquitinated. Interacts with PSMC2 through SQSTM1. Interacts with FKBP4. Binds to CSNK1D. Interacts with SGK1. Interacts with PIN1. Interacts with LRRK2. Interacts with LRP1, leading to endocytosis; this interaction is reduced in the presence of LRPAP1/RAP. Polyubiquitinated. Requires functional TRAF6 and may provoke SQSTM1-dependent degradation by the proteasome. Post-translationally, phosphorylation at various serine and threonine residues in S-P or T-P motifs by proline-directed protein kinases (PDPK1, CDK1, CDK5, GSK3, MAPK) (a few sites per protein in interphase, more in mitosis), and at serine residues in K-X-G-S motifs by MAP/microtubule affinity-regulating kinase (MARK1, MARK2, MARK3, MARK4), causing detachment from microtubules, and their disassembly. Phosphorylation at Ser-224 by BRSK1 and BRSK2 in neurons affects ability to bind microtubules and plays a role in neuron polarization. Phosphorylated by PHK. Dephosphorylation at several serine and threonine residues by the serine/threonine phosphatase PPP5C. As to expression, expressed in neurons.

It localises to the cytoplasm. It is found in the cytosol. Its subcellular location is the cell membrane. The protein localises to the cytoskeleton. The protein resides in the cell projection. It localises to the axon. It is found in the dendrite. Its function is as follows. Promotes microtubule assembly and stability, and might be involved in the establishment and maintenance of neuronal polarity. The C-terminus binds axonal microtubules while the N-terminus binds neural plasma membrane components, suggesting that tau functions as a linker protein between both. Axonal polarity is predetermined by tau localization (in the neuronal cell) in the domain of the cell body defined by the centrosome. The short isoforms allow plasticity of the cytoskeleton whereas the longer isoforms may preferentially play a role in its stabilization. The protein is Microtubule-associated protein tau (MAPT) of Capra hircus (Goat).